The sequence spans 1502 residues: E3 ubiquitin-protein ligase UPL4 (1502 aa).

The span at 1 to 21 (MENRGQKRMEVVEELPADKRA) shows a compositional bias: basic and acidic residues. The disordered stretch occupies residues 1–107 (MENRGQKRME…DYQRQRSSGD (107 aa)). Residues 22–46 (CNSQDFRPSTSGSSVQAQANDTNPG) show a composition bias toward polar residues. Residues 67 to 90 (DEEEQEEQDKEDSDYGSCDSDEED) are compositionally biased toward acidic residues. Over residues 91-107 (PRQRVLQDYQRQRSSGD) the composition is skewed to basic and acidic residues. ARM repeat units follow at residues 143–183 (EESL…YLCD), 186–226 (PPSV…KISR), 228–265 (EPVACLNAGAIMAVLSFIDFFSTSIQRVAISTVVNICK), and 267–306 (LSSESPSPFMDAVPILCTLLQYEDRQLVENVAICLTKIAD). The segment at 833-881 (CQAESSSPMEIDSESSDASQLQGSQVEDQTQLPGQQNASSSETSSEKED) is disordered. The span at 849-875 (DASQLQGSQVEDQTQLPGQQNASSSET) shows a compositional bias: polar residues. Residues 1022–1096 (RPVPHSEFVS…IRHHPQHLSS (75 aa)) form a K-box region. The 375-residue stretch at 1128–1502 (KMMELYGNQK…TEGQGSFHLS (375 aa)) folds into the HECT domain. Residue cysteine 1469 is the Glycyl thioester intermediate of the active site.

It belongs to the UPL family. K-HECT subfamily.

The enzyme catalyses S-ubiquitinyl-[E2 ubiquitin-conjugating enzyme]-L-cysteine + [acceptor protein]-L-lysine = [E2 ubiquitin-conjugating enzyme]-L-cysteine + N(6)-ubiquitinyl-[acceptor protein]-L-lysine.. It functions in the pathway protein modification; protein ubiquitination. Probable E3 ubiquitin-protein ligase which mediates ubiquitination and subsequent proteasomal degradation of target proteins. This is E3 ubiquitin-protein ligase UPL4 (UPL4) from Arabidopsis thaliana (Mouse-ear cress).